A 390-amino-acid chain; its full sequence is Elongation factor Tu 2 (390 aa).

The region spanning 10-201 (KPHVNVGTIG…LDDYVEVPPR (192 aa)) is the tr-type G domain. Positions 19-26 (GHVDHGKT) are G1. 19 to 26 (GHVDHGKT) lines the GTP pocket. Thr26 is a Mg(2+) binding site. Residues 55-59 (GITIA) are G2. The G3 stretch occupies residues 76–79 (DCPG). Residues 76–80 (DCPGH) and 131–134 (NKAD) each bind GTP. The interval 131 to 134 (NKAD) is G4. A G5 region spans residues 168–170 (SAL).

This sequence belongs to the TRAFAC class translation factor GTPase superfamily. Classic translation factor GTPase family. EF-Tu/EF-1A subfamily. As to quaternary structure, monomer.

Its subcellular location is the cytoplasm. It carries out the reaction GTP + H2O = GDP + phosphate + H(+). In terms of biological role, GTP hydrolase that promotes the GTP-dependent binding of aminoacyl-tRNA to the A-site of ribosomes during protein biosynthesis. This Wolbachia sp. subsp. Brugia malayi (strain TRS) protein is Elongation factor Tu 2.